We begin with the raw amino-acid sequence, 100 residues long: Mitochondrial import inner membrane translocase subunit Tim10 B (100 aa).

The Twin CX3C motif signature appears at 25–49; sequence CFQRCVPSLHHRALDAEEEACLHSC. Cystine bridges form between cysteine 25–cysteine 49 and cysteine 29–cysteine 45.

The protein belongs to the small Tim family. In terms of assembly, component of the TIM22 complex, which core is composed of TIMM22, associated with TIMM10 (TIMM10A and/or TIMM10B), TIMM9, AGK and TIMM29.

The protein resides in the mitochondrion inner membrane. Functionally, component of the TIM22 complex, a complex that mediates the import and insertion of multi-pass transmembrane proteins into the mitochondrial inner membrane. The TIM22 complex forms a twin-pore translocase that uses the membrane potential as the external driving force. In the TIM22 complex, it may act as a docking point for the soluble 70 kDa complex that guides the target proteins in transit through the aqueous mitochondrial intermembrane space. The polypeptide is Mitochondrial import inner membrane translocase subunit Tim10 B (Timm10b) (Mus musculus (Mouse)).